We begin with the raw amino-acid sequence, 366 residues long: 2-aminoethylphosphonate--pyruvate transaminase (366 aa).

Residue K192 is modified to N6-(pyridoxal phosphate)lysine.

This sequence belongs to the class-V pyridoxal-phosphate-dependent aminotransferase family. PhnW subfamily. As to quaternary structure, homodimer. It depends on pyridoxal 5'-phosphate as a cofactor.

The catalysed reaction is (2-aminoethyl)phosphonate + pyruvate = phosphonoacetaldehyde + L-alanine. Functionally, involved in phosphonate degradation. The sequence is that of 2-aminoethylphosphonate--pyruvate transaminase (phnW) from Lysinibacillus sphaericus (strain C3-41).